Reading from the N-terminus, the 131-residue chain is Large ribosomal subunit protein bL17 (131 aa).

This sequence belongs to the bacterial ribosomal protein bL17 family. In terms of assembly, part of the 50S ribosomal subunit. Contacts protein L32.

This chain is Large ribosomal subunit protein bL17, found in Finegoldia magna (strain ATCC 29328 / DSM 20472 / WAL 2508) (Peptostreptococcus magnus).